The following is a 243-amino-acid chain: DNA repair protein RecO (243 aa).

This sequence belongs to the RecO family.

Its function is as follows. Involved in DNA repair and RecF pathway recombination. This is DNA repair protein RecO from Chlamydia trachomatis serovar L2 (strain ATCC VR-902B / DSM 19102 / 434/Bu).